The chain runs to 477 residues: Aspartyl/glutamyl-tRNA(Asn/Gln) amidotransferase subunit B (477 aa).

The protein belongs to the GatB/GatE family. GatB subfamily. As to quaternary structure, heterotrimer of A, B and C subunits.

The catalysed reaction is L-glutamyl-tRNA(Gln) + L-glutamine + ATP + H2O = L-glutaminyl-tRNA(Gln) + L-glutamate + ADP + phosphate + H(+). It carries out the reaction L-aspartyl-tRNA(Asn) + L-glutamine + ATP + H2O = L-asparaginyl-tRNA(Asn) + L-glutamate + ADP + phosphate + 2 H(+). Allows the formation of correctly charged Asn-tRNA(Asn) or Gln-tRNA(Gln) through the transamidation of misacylated Asp-tRNA(Asn) or Glu-tRNA(Gln) in organisms which lack either or both of asparaginyl-tRNA or glutaminyl-tRNA synthetases. The reaction takes place in the presence of glutamine and ATP through an activated phospho-Asp-tRNA(Asn) or phospho-Glu-tRNA(Gln). This is Aspartyl/glutamyl-tRNA(Asn/Gln) amidotransferase subunit B from Ureaplasma urealyticum serovar 10 (strain ATCC 33699 / Western).